The primary structure comprises 209 residues: Uracil phosphoribosyltransferase (209 aa).

5-phospho-alpha-D-ribose 1-diphosphate is bound by residues Arg79, Arg104, and 131-139 (DPLLATGNS). Uracil-binding positions include Ile194 and 199 to 201 (GDA). Residue Asp200 participates in 5-phospho-alpha-D-ribose 1-diphosphate binding.

This sequence belongs to the UPRTase family. It depends on Mg(2+) as a cofactor.

The catalysed reaction is UMP + diphosphate = 5-phospho-alpha-D-ribose 1-diphosphate + uracil. Its pathway is pyrimidine metabolism; UMP biosynthesis via salvage pathway; UMP from uracil: step 1/1. Allosterically activated by GTP. In terms of biological role, catalyzes the conversion of uracil and 5-phospho-alpha-D-ribose 1-diphosphate (PRPP) to UMP and diphosphate. In Rhodococcus opacus (strain B4), this protein is Uracil phosphoribosyltransferase.